Reading from the N-terminus, the 948-residue chain is Protein translocase subunit SecA (948 aa).

ATP is bound by residues Q91, G109–T113, and D509.

The protein belongs to the SecA family. In terms of assembly, monomer and homodimer. Part of the essential Sec protein translocation apparatus which comprises SecA, SecYEG and auxiliary proteins SecDF. Other proteins may also be involved.

The protein resides in the cell inner membrane. It localises to the cellular thylakoid membrane. The protein localises to the cytoplasm. The enzyme catalyses ATP + H2O + cellular proteinSide 1 = ADP + phosphate + cellular proteinSide 2.. In terms of biological role, part of the Sec protein translocase complex. Interacts with the SecYEG preprotein conducting channel. Has a central role in coupling the hydrolysis of ATP to the transfer of proteins into and across the cell membrane, serving as an ATP-driven molecular motor driving the stepwise translocation of polypeptide chains across the membrane. Functionally, probably participates in protein translocation into and across both the cytoplasmic and thylakoid membranes in cyanobacterial cells. This chain is Protein translocase subunit SecA, found in Synechococcus elongatus (strain ATCC 33912 / PCC 7942 / FACHB-805) (Anacystis nidulans R2).